Reading from the N-terminus, the 85-residue chain is Platelet factor 4 (85 aa).

Intrachain disulfides connect Cys-25-Cys-51 and Cys-27-Cys-67. Phosphoserine is present on Ser-41. 76–82 is a heparin binding site; sequence KKIIKRL.

This sequence belongs to the intercrine alpha (chemokine CxC) family. As to quaternary structure, homotetramer. Interacts with TNFAIP6 (via Link domain). Interacts with CCR1. Interacts with CXCR3. Interacts with THBD; this interaction enhances generation of activated protein C.

It is found in the secreted. Its function is as follows. Chemokine released during platelet aggregation that plays a role in different biological processes including hematopoiesis, cell proliferation, differentiation, and activation. Acts via different functional receptors including CCR1, CXCR3A or CXCR3B. Upon interaction with CXCR3A receptor, induces activated T-lymphocytes migration mediated via downstream Ras/extracellular signal-regulated kinase (ERK) signaling. Neutralizes the anticoagulant effect of heparin by binding more strongly to heparin than to the chondroitin-4-sulfate chains of the carrier molecule. Plays a role in the inhibition of hematopoiesis and in the maintenance of hematopoietic stem cell (HSC) quiescence. Chemotactic for neutrophils and monocytes via CCR1. Inhibits endothelial cell proliferation. In cooperation with toll-like receptor 8/TLR8, induces chromatin remodeling and activates inflammatory gene expression via the TBK1-IRF5 axis. In addition, induces myofibroblast differentiation and collagen synthesis in different precursor cells, including endothelial cells, by stimulating endothelial-to-mesenchymal transition. Interacts with thrombomodulin/THBD to enhance the activation of protein C and thus potentiates its anticoagulant activity. The sequence is that of Platelet factor 4 (PF4) from Ovis aries (Sheep).